The following is a 356-amino-acid chain: tRNA N6-adenosine threonylcarbamoyltransferase (356 aa).

Fe cation is bound by residues histidine 116 and histidine 120. Residues 139-143, aspartate 174, glycine 187, aspartate 191, and asparagine 281 contribute to the substrate site; that span reads IVSGG. A Fe cation-binding site is contributed by aspartate 309.

Belongs to the KAE1 / TsaD family. Fe(2+) serves as cofactor.

The protein resides in the cytoplasm. The enzyme catalyses L-threonylcarbamoyladenylate + adenosine(37) in tRNA = N(6)-L-threonylcarbamoyladenosine(37) in tRNA + AMP + H(+). In terms of biological role, required for the formation of a threonylcarbamoyl group on adenosine at position 37 (t(6)A37) in tRNAs that read codons beginning with adenine. Is involved in the transfer of the threonylcarbamoyl moiety of threonylcarbamoyl-AMP (TC-AMP) to the N6 group of A37, together with TsaE and TsaB. TsaD likely plays a direct catalytic role in this reaction. The sequence is that of tRNA N6-adenosine threonylcarbamoyltransferase from Frankia alni (strain DSM 45986 / CECT 9034 / ACN14a).